We begin with the raw amino-acid sequence, 287 residues long: Nucleotide-binding protein Pmob_0154 (287 aa).

ATP is bound at residue 15-22 (GLSGAGKT). 64-67 (DIRW) is a binding site for GTP.

This sequence belongs to the RapZ-like family.

Its function is as follows. Displays ATPase and GTPase activities. The chain is Nucleotide-binding protein Pmob_0154 from Petrotoga mobilis (strain DSM 10674 / SJ95).